Consider the following 104-residue polypeptide: Type VII secretion system extracellular protein B (104 aa).

The protein belongs to the WXG100 family. In terms of assembly, homodimer. When mixed with EsxA does not form heterodimers. Forms heterodimers with EsxD.

Its subcellular location is the secreted. Virulence factor that is important for the establishment of infection in the host. EsxB is required for EsxA synthesis as well as secretion. Mediates together with EsxA the release of S.aureus from the host cell. Also inhibits host cytokine production and thus modulates dendritic cell-mediated immunity. The sequence is that of Type VII secretion system extracellular protein B from Staphylococcus aureus (strain USA300).